Reading from the N-terminus, the 251-residue chain is Hydroxyacylglutathione hydrolase (251 aa).

Zn(2+) contacts are provided by H53, H55, D57, H58, H110, D127, and H165.

Belongs to the metallo-beta-lactamase superfamily. Glyoxalase II family. As to quaternary structure, monomer. Requires Zn(2+) as cofactor.

It catalyses the reaction an S-(2-hydroxyacyl)glutathione + H2O = a 2-hydroxy carboxylate + glutathione + H(+). Its pathway is secondary metabolite metabolism; methylglyoxal degradation; (R)-lactate from methylglyoxal: step 2/2. In terms of biological role, thiolesterase that catalyzes the hydrolysis of S-D-lactoyl-glutathione to form glutathione and D-lactic acid. The polypeptide is Hydroxyacylglutathione hydrolase (Shigella dysenteriae serotype 1 (strain Sd197)).